A 267-amino-acid chain; its full sequence is Formamidopyrimidine-DNA glycosylase (267 aa).

P2 (schiff-base intermediate with DNA) is an active-site residue. The Proton donor role is filled by E3. The Proton donor; for beta-elimination activity role is filled by K53. H82 and R100 together coordinate DNA. An FPG-type zinc finger spans residues A230–G264. The Proton donor; for delta-elimination activity role is filled by R254.

It belongs to the FPG family. As to quaternary structure, monomer. Requires Zn(2+) as cofactor.

The enzyme catalyses Hydrolysis of DNA containing ring-opened 7-methylguanine residues, releasing 2,6-diamino-4-hydroxy-5-(N-methyl)formamidopyrimidine.. It catalyses the reaction 2'-deoxyribonucleotide-(2'-deoxyribose 5'-phosphate)-2'-deoxyribonucleotide-DNA = a 3'-end 2'-deoxyribonucleotide-(2,3-dehydro-2,3-deoxyribose 5'-phosphate)-DNA + a 5'-end 5'-phospho-2'-deoxyribonucleoside-DNA + H(+). In terms of biological role, involved in base excision repair of DNA damaged by oxidation or by mutagenic agents. Acts as a DNA glycosylase that recognizes and removes damaged bases. Has a preference for oxidized purines, such as 7,8-dihydro-8-oxoguanine (8-oxoG). Has AP (apurinic/apyrimidinic) lyase activity and introduces nicks in the DNA strand. Cleaves the DNA backbone by beta-delta elimination to generate a single-strand break at the site of the removed base with both 3'- and 5'-phosphates. This chain is Formamidopyrimidine-DNA glycosylase, found in Thermus thermophilus (strain ATCC BAA-163 / DSM 7039 / HB27).